The following is a 119-amino-acid chain: Large ribosomal subunit protein uL22c (119 aa).

It belongs to the universal ribosomal protein uL22 family. Part of the 50S ribosomal subunit.

The protein resides in the plastid. It localises to the chloroplast. This protein binds specifically to 23S rRNA. Its function is as follows. The globular domain of the protein is located near the polypeptide exit tunnel on the outside of the subunit, while an extended beta-hairpin is found that lines the wall of the exit tunnel in the center of the 70S ribosome. The polypeptide is Large ribosomal subunit protein uL22c (rpl22) (Marchantia polymorpha (Common liverwort)).